The following is an 831-amino-acid chain: von Willebrand factor A domain-containing protein DDB_G0285981 (831 aa).

A VIT domain is found at 60 to 188 (RDTFGLKTFS…NVTIHLTIIS (129 aa)). The VWFA domain occupies 312-480 (EFIFLIDCSG…NFEEQVMKLV (169 aa)).

This Dictyostelium discoideum (Social amoeba) protein is von Willebrand factor A domain-containing protein DDB_G0285981.